We begin with the raw amino-acid sequence, 266 residues long: Thymidylate synthase (266 aa).

DUMP is bound at residue arginine 24. Histidine 54 is a binding site for (6R)-5,10-methylene-5,6,7,8-tetrahydrofolate. 129–130 is a dUMP binding site; the sequence is RR. Residue cysteine 149 is the Nucleophile of the active site. Residues 169–172, asparagine 180, and 210–212 contribute to the dUMP site; these read RSAD and HIY. Aspartate 172 is a binding site for (6R)-5,10-methylene-5,6,7,8-tetrahydrofolate. Alanine 265 lines the (6R)-5,10-methylene-5,6,7,8-tetrahydrofolate pocket.

It belongs to the thymidylate synthase family. Bacterial-type ThyA subfamily. Homodimer.

The protein localises to the cytoplasm. The catalysed reaction is dUMP + (6R)-5,10-methylene-5,6,7,8-tetrahydrofolate = 7,8-dihydrofolate + dTMP. It functions in the pathway pyrimidine metabolism; dTTP biosynthesis. Catalyzes the reductive methylation of 2'-deoxyuridine-5'-monophosphate (dUMP) to 2'-deoxythymidine-5'-monophosphate (dTMP) while utilizing 5,10-methylenetetrahydrofolate (mTHF) as the methyl donor and reductant in the reaction, yielding dihydrofolate (DHF) as a by-product. This enzymatic reaction provides an intracellular de novo source of dTMP, an essential precursor for DNA biosynthesis. The sequence is that of Thymidylate synthase from Nocardia farcinica (strain IFM 10152).